Consider the following 470-residue polypeptide: ATP-dependent protease ATPase subunit HslU (470 aa).

Residues valine 22 and 64-69 (GVGKTE) contribute to the ATP site. Residues 145–187 (KKANNNTNSNNPLESLFGGSIPNFGQNNDDEEETPTDEVKTKR) form a disordered region. Aspartate 283, glutamate 348, and arginine 420 together coordinate ATP.

It belongs to the ClpX chaperone family. HslU subfamily. As to quaternary structure, a double ring-shaped homohexamer of HslV is capped on each side by a ring-shaped HslU homohexamer. The assembly of the HslU/HslV complex is dependent on binding of ATP.

Its subcellular location is the cytoplasm. In terms of biological role, ATPase subunit of a proteasome-like degradation complex; this subunit has chaperone activity. The binding of ATP and its subsequent hydrolysis by HslU are essential for unfolding of protein substrates subsequently hydrolyzed by HslV. HslU recognizes the N-terminal part of its protein substrates and unfolds these before they are guided to HslV for hydrolysis. The protein is ATP-dependent protease ATPase subunit HslU of Staphylococcus saprophyticus subsp. saprophyticus (strain ATCC 15305 / DSM 20229 / NCIMB 8711 / NCTC 7292 / S-41).